The chain runs to 338 residues: Solute carrier family 35 member G4 (338 aa).

Positions 1-29 (MAGSHPYFNLPDSTHPSPPSTPPSLHWHQ) are disordered. 7 consecutive transmembrane segments (helical) span residues 37-57 (TNGLLVALLGGGLPAGFVGPL), 160-180 (CGLLGSILGLIIIVGPGLWTL), 190-210 (GLGYVQAFLGGLALSLGLLVY), 221-241 (TVAFLSGLVGLLGSVPGLFVL), 250-270 (LLSWSCVGAVGILTLVSFTCV), 281-301 (LVCAVLHSEVVMALILQYFML), and 305-325 (VAPSDIMGAGVVLGSIAIITA). An EamA 1 domain is found at 49-174 (LPAGFVGPLS…SILGLIIIVG (126 aa)). The region spanning 272–325 (YAVTKAHPALVCAVLHSEVVMALILQYFMLHETVAPSDIMGAGVVLGSIAIITA) is the EamA 2 domain.

This sequence belongs to the SLC35G solute transporter family.

It localises to the membrane. This is Solute carrier family 35 member G4 (SLC35G4) from Homo sapiens (Human).